Consider the following 190-residue polypeptide: Threonylcarbamoyl-AMP synthase (190 aa).

Positions 7 to 190 (ADAISFIVDV…ALTGELFRQG (184 aa)) constitute a YrdC-like domain.

Belongs to the SUA5 family. TsaC subfamily.

It is found in the cytoplasm. The catalysed reaction is L-threonine + hydrogencarbonate + ATP = L-threonylcarbamoyladenylate + diphosphate + H2O. In terms of biological role, required for the formation of a threonylcarbamoyl group on adenosine at position 37 (t(6)A37) in tRNAs that read codons beginning with adenine. Catalyzes the conversion of L-threonine, HCO(3)(-)/CO(2) and ATP to give threonylcarbamoyl-AMP (TC-AMP) as the acyladenylate intermediate, with the release of diphosphate. The polypeptide is Threonylcarbamoyl-AMP synthase (Cronobacter sakazakii (strain ATCC BAA-894) (Enterobacter sakazakii)).